The following is a 303-amino-acid chain: Glycine--tRNA ligase alpha subunit (303 aa).

Belongs to the class-II aminoacyl-tRNA synthetase family. In terms of assembly, tetramer of two alpha and two beta subunits.

It localises to the cytoplasm. The catalysed reaction is tRNA(Gly) + glycine + ATP = glycyl-tRNA(Gly) + AMP + diphosphate. The polypeptide is Glycine--tRNA ligase alpha subunit (Klebsiella pneumoniae subsp. pneumoniae (strain ATCC 700721 / MGH 78578)).